Reading from the N-terminus, the 310-residue chain is Methionyl-tRNA formyltransferase (310 aa).

110 to 113 (SVLP) provides a ligand contact to (6S)-5,6,7,8-tetrahydrofolate. The segment at 283–310 (TVQPPGKKSMNAADWARGARAEDIRRAR) is disordered. The span at 299–310 (RGARAEDIRRAR) shows a compositional bias: basic and acidic residues.

The protein belongs to the Fmt family.

It catalyses the reaction L-methionyl-tRNA(fMet) + (6R)-10-formyltetrahydrofolate = N-formyl-L-methionyl-tRNA(fMet) + (6S)-5,6,7,8-tetrahydrofolate + H(+). Functionally, attaches a formyl group to the free amino group of methionyl-tRNA(fMet). The formyl group appears to play a dual role in the initiator identity of N-formylmethionyl-tRNA by promoting its recognition by IF2 and preventing the misappropriation of this tRNA by the elongation apparatus. This Mycolicibacterium gilvum (strain PYR-GCK) (Mycobacterium gilvum (strain PYR-GCK)) protein is Methionyl-tRNA formyltransferase.